Here is a 338-residue protein sequence, read N- to C-terminus: Heat-inducible transcription repressor HrcA (338 aa).

This sequence belongs to the HrcA family.

Negative regulator of class I heat shock genes (grpE-dnaK-dnaJ and groELS operons). Prevents heat-shock induction of these operons. The chain is Heat-inducible transcription repressor HrcA from Bacillus cereus (strain ATCC 10987 / NRS 248).